A 318-amino-acid chain; its full sequence is Protoheme IX farnesyltransferase (318 aa).

9 consecutive transmembrane segments (helical) span residues isoleucine 31–leucine 51, leucine 55–cysteine 75, isoleucine 98–leucine 118, leucine 125–leucine 145, isoleucine 153–glycine 173, isoleucine 181–isoleucine 201, alanine 206–alanine 228, leucine 238–leucine 260, and phenylalanine 285–alanine 305.

This sequence belongs to the UbiA prenyltransferase family. Protoheme IX farnesyltransferase subfamily.

It is found in the cell inner membrane. It catalyses the reaction heme b + (2E,6E)-farnesyl diphosphate + H2O = Fe(II)-heme o + diphosphate. Its pathway is porphyrin-containing compound metabolism; heme O biosynthesis; heme O from protoheme: step 1/1. Its function is as follows. Converts heme B (protoheme IX) to heme O by substitution of the vinyl group on carbon 2 of heme B porphyrin ring with a hydroxyethyl farnesyl side group. The chain is Protoheme IX farnesyltransferase from Synechococcus elongatus (strain ATCC 33912 / PCC 7942 / FACHB-805) (Anacystis nidulans R2).